Reading from the N-terminus, the 267-residue chain is NAD kinase (267 aa).

Residue D45 is the Proton acceptor of the active site. NAD(+) is bound by residues 45 to 46, 122 to 123, R148, D150, 161 to 166, A185, and Q223; these read DG, NE, and TAYNKS.

This sequence belongs to the NAD kinase family. Requires a divalent metal cation as cofactor.

The protein localises to the cytoplasm. The enzyme catalyses NAD(+) + ATP = ADP + NADP(+) + H(+). Involved in the regulation of the intracellular balance of NAD and NADP, and is a key enzyme in the biosynthesis of NADP. Catalyzes specifically the phosphorylation on 2'-hydroxyl of the adenosine moiety of NAD to yield NADP. The protein is NAD kinase of Levilactobacillus brevis (strain ATCC 367 / BCRC 12310 / CIP 105137 / JCM 1170 / LMG 11437 / NCIMB 947 / NCTC 947) (Lactobacillus brevis).